A 258-amino-acid chain; its full sequence is Small ribosomal subunit protein uS2 (258 aa).

This sequence belongs to the universal ribosomal protein uS2 family.

The sequence is that of Small ribosomal subunit protein uS2 from Streptococcus suis (strain 05ZYH33).